A 439-amino-acid chain; its full sequence is Trigger factor (439 aa).

The 86-residue stretch at 165-250 (GDFAKFDFEG…LHEIQELKLP (86 aa)) folds into the PPIase FKBP-type domain.

The protein belongs to the FKBP-type PPIase family. Tig subfamily.

It is found in the cytoplasm. It catalyses the reaction [protein]-peptidylproline (omega=180) = [protein]-peptidylproline (omega=0). Involved in protein export. Acts as a chaperone by maintaining the newly synthesized protein in an open conformation. Functions as a peptidyl-prolyl cis-trans isomerase. This chain is Trigger factor, found in Campylobacter lari (strain RM2100 / D67 / ATCC BAA-1060).